The chain runs to 287 residues: MTTQKFGQIIDGVALSAKLRADVATRVLALKARGVTPGLAVILVGEDPASAVYVRNKVKACQDTGVRSVFEKYEATLSEADLLARIAALNADPSIHGILVQMPIPKHINPHKVIEAISVTKDVDGYATLSAGELMTGAPGFRPCTPYGCMKLIETTGIDLRGKHAVVIGRSNTVGKPMALLLLQANATVTVCHSATRDIGYHTRQADVIVAAVGKRNVLTADMVKPGAVVIDVGMNRNDEGKLCGDVDFAGVKEVAGFITPVPGGVGPMTITMLLVNTLEAAERTVK.

Residues 169-171 (GRS) and S194 each bind NADP(+).

Belongs to the tetrahydrofolate dehydrogenase/cyclohydrolase family. Homodimer.

The catalysed reaction is (6R)-5,10-methylene-5,6,7,8-tetrahydrofolate + NADP(+) = (6R)-5,10-methenyltetrahydrofolate + NADPH. It carries out the reaction (6R)-5,10-methenyltetrahydrofolate + H2O = (6R)-10-formyltetrahydrofolate + H(+). It participates in one-carbon metabolism; tetrahydrofolate interconversion. Its function is as follows. Catalyzes the oxidation of 5,10-methylenetetrahydrofolate to 5,10-methenyltetrahydrofolate and then the hydrolysis of 5,10-methenyltetrahydrofolate to 10-formyltetrahydrofolate. The chain is Bifunctional protein FolD from Albidiferax ferrireducens (strain ATCC BAA-621 / DSM 15236 / T118) (Rhodoferax ferrireducens).